A 172-amino-acid chain; its full sequence is Galectin-related protein (172 aa).

Residue A2 is modified to N-acetylalanine. A phosphoserine mark is found at S22 and S25. The Galectin domain occupies P39–I168.

In terms of assembly, monomer.

Does not bind lactose, and may not bind carbohydrates. This Homo sapiens (Human) protein is Galectin-related protein (LGALSL).